The sequence spans 199 residues: MPADFALTNLTNHFLIAMPGLQDEIFSRSVVYVCEHSQRGALGLVINKPCDIDMKRLFEKVELPMCRADLSNTPVFLGGPVQTERGFVLHEATFADADKPAESVYASTMVIPGGLEMTTSKDVLEAISIGAGPRKVLVSLGYAAWGEGQLESEISENSWLTVAANNSVIFDTPVAQRYEQALLLLGLELWMLSPDAGHA.

Belongs to the UPF0301 (AlgH) family.

This is UPF0301 protein Rfer_1377 from Albidiferax ferrireducens (strain ATCC BAA-621 / DSM 15236 / T118) (Rhodoferax ferrireducens).